We begin with the raw amino-acid sequence, 188 residues long: Elongation factor P (188 aa).

The protein belongs to the elongation factor P family.

It is found in the cytoplasm. The protein operates within protein biosynthesis; polypeptide chain elongation. Functionally, involved in peptide bond synthesis. Stimulates efficient translation and peptide-bond synthesis on native or reconstituted 70S ribosomes in vitro. Probably functions indirectly by altering the affinity of the ribosome for aminoacyl-tRNA, thus increasing their reactivity as acceptors for peptidyl transferase. The sequence is that of Elongation factor P from Rickettsia bellii (strain OSU 85-389).